The primary structure comprises 118 residues: NADH-quinone oxidoreductase subunit A 2 (118 aa).

3 consecutive transmembrane segments (helical) span residues 5–25, 62–82, and 87–107; these read YLPIIVLVVVAVLFGCGSLIF, IIAMLFILFDIEAVFLYPWAV, and LGMFGLMEMGVFIVILFVGYI.

This sequence belongs to the complex I subunit 3 family. NDH-1 is composed of 14 different subunits. Subunits NuoA, H, J, K, L, M, N constitute the membrane sector of the complex.

The protein resides in the cell inner membrane. The enzyme catalyses a quinone + NADH + 5 H(+)(in) = a quinol + NAD(+) + 4 H(+)(out). In terms of biological role, NDH-1 shuttles electrons from NADH, via FMN and iron-sulfur (Fe-S) centers, to quinones in the respiratory chain. The immediate electron acceptor for the enzyme in this species is believed to be ubiquinone. Couples the redox reaction to proton translocation (for every two electrons transferred, four hydrogen ions are translocated across the cytoplasmic membrane), and thus conserves the redox energy in a proton gradient. The protein is NADH-quinone oxidoreductase subunit A 2 of Geotalea uraniireducens (strain Rf4) (Geobacter uraniireducens).